The following is an 85-amino-acid chain: RNA-binding protein Hfq (85 aa).

Residues 10–70 form the Sm domain; that stretch reads DAFLNQVRKE…ISTIIPQRPV (61 aa).

Belongs to the Hfq family. Homohexamer.

In terms of biological role, RNA chaperone that binds small regulatory RNA (sRNAs) and mRNAs to facilitate mRNA translational regulation in response to envelope stress, environmental stress and changes in metabolite concentrations. Also binds with high specificity to tRNAs. In Carboxydothermus hydrogenoformans (strain ATCC BAA-161 / DSM 6008 / Z-2901), this protein is RNA-binding protein Hfq.